A 784-amino-acid polypeptide reads, in one-letter code: ent-copalyl diphosphate synthase 2, chloroplastic (784 aa).

Residues 1–57 (MSMTLFASVTRPGLPGPTALRFPETRHLFHSVTAFAASFSPSKSSVGSSQCNATTPP) constitute a chloroplast transit peptide. Lys242 serves as a coordination point for substrate. Mg(2+) contacts are provided by Asp379 and Asp381. The DXDD motif signature appears at 379–382 (DIDD). Lys466 contacts substrate.

The protein belongs to the terpene synthase family. Requires Mg(2+) as cofactor. As to expression, present in both leaves and flowers.

Its subcellular location is the plastid. The protein localises to the chloroplast. It functions in the pathway plant hormone biosynthesis; gibberellin biosynthesis. It participates in secondary metabolite biosynthesis; terpenoid biosynthesis. In terms of biological role, involved in the biosynthesis of labdane-type diterpenoid including marrubiin and other labdane-related furanoid diterpenoids with potential applications as anti-diabetics, analgesics or vasorelaxants. May be involved in the conversion of geranylgeranyl diphosphate (GGPP) to ent-copalyl diphosphate (ent-CPP) and 8-hydroxycopalyl diphosphate (LPP, labda-13-en-8-ol diphosphate). The protein is ent-copalyl diphosphate synthase 2, chloroplastic of Marrubium vulgare (White horehound).